A 185-amino-acid chain; its full sequence is Lactoylglutathione lyase (185 aa).

Residues 1-22 are disordered; the sequence is MASEARESPANNPGLSTNRDEA. One can recognise a VOC domain in the interval 27–174; that stretch reads IMQQTMFRIK…DGYWIEIFDL (148 aa). Residues glutamine 30 and arginine 34 each contribute to the substrate site. Zn(2+) is bound at residue glutamine 30. Glutamate 96 contacts Zn(2+). Residues asparagine 100, arginine 120, histidine 124, and 154–155 each bind substrate; that span reads KM. A Zn(2+)-binding site is contributed by histidine 124. Position 170 (glutamate 170) interacts with Zn(2+). The Proton donor/acceptor role is filled by glutamate 170.

This sequence belongs to the glyoxalase I family. The cofactor is Zn(2+).

The catalysed reaction is (R)-S-lactoylglutathione = methylglyoxal + glutathione. It participates in secondary metabolite metabolism; methylglyoxal degradation; (R)-lactate from methylglyoxal: step 1/2. In terms of biological role, catalyzes the conversion of hemimercaptal, formed from methylglyoxal and glutathione, to S-lactoylglutathione. In Arabidopsis thaliana (Mouse-ear cress), this protein is Lactoylglutathione lyase.